Consider the following 153-residue polypeptide: Probable histone H2A.2 (153 aa).

2 disordered regions span residues 1-24 (MDAS…KKSV) and 127-153 (KKTE…PKKA). The segment covering 127 to 141 (KKTERSNTVSKEPKS) has biased composition (basic and acidic residues). Basic residues predominate over residues 142-153 (PKPKAGKSPKKA). The short motif at 149 to 152 (SPKK) is the SPKK motif element.

The protein belongs to the histone H2A family. As to quaternary structure, the nucleosome is a histone octamer containing two molecules each of H2A, H2B, H3 and H4 assembled in one H3-H4 heterotetramer and two H2A-H2B heterodimers. The octamer wraps approximately 147 bp of DNA.

The protein localises to the nucleus. Its subcellular location is the chromosome. Core component of nucleosome. Nucleosomes wrap and compact DNA into chromatin, limiting DNA accessibility to the cellular machineries which require DNA as a template. Histones thereby play a central role in transcription regulation, DNA repair, DNA replication and chromosomal stability. DNA accessibility is regulated via a complex set of post-translational modifications of histones, also called histone code, and nucleosome remodeling. The sequence is that of Probable histone H2A.2 from Medicago truncatula (Barrel medic).